Reading from the N-terminus, the 112-residue chain is UPF0060 membrane protein SCO3297 (112 aa).

4 consecutive transmembrane segments (helical) span residues 8-28 (ALFVVAALFEIGGAWLVWQGV), 33-53 (GWLWAAGGVLALGAYGFVATF), 62-82 (ILAAYGGIFVTGSILWGVVAD), and 88-108 (RWDIAGALVCLAGMALIMWAP).

The protein belongs to the UPF0060 family.

The protein localises to the cell membrane. The sequence is that of UPF0060 membrane protein SCO3297 from Streptomyces coelicolor (strain ATCC BAA-471 / A3(2) / M145).